The chain runs to 359 residues: Phosphoserine aminotransferase (359 aa).

Residue arginine 41 participates in L-glutamate binding. Pyridoxal 5'-phosphate is bound by residues 75 to 76, tryptophan 101, threonine 152, aspartate 171, and glutamine 194; that span reads AS. Lysine 195 bears the N6-(pyridoxal phosphate)lysine mark. 236–237 serves as a coordination point for pyridoxal 5'-phosphate; it reads NT.

The protein belongs to the class-V pyridoxal-phosphate-dependent aminotransferase family. SerC subfamily. As to quaternary structure, homodimer. It depends on pyridoxal 5'-phosphate as a cofactor.

It localises to the cytoplasm. The enzyme catalyses O-phospho-L-serine + 2-oxoglutarate = 3-phosphooxypyruvate + L-glutamate. It carries out the reaction 4-(phosphooxy)-L-threonine + 2-oxoglutarate = (R)-3-hydroxy-2-oxo-4-phosphooxybutanoate + L-glutamate. It functions in the pathway amino-acid biosynthesis; L-serine biosynthesis; L-serine from 3-phospho-D-glycerate: step 2/3. Its pathway is cofactor biosynthesis; pyridoxine 5'-phosphate biosynthesis; pyridoxine 5'-phosphate from D-erythrose 4-phosphate: step 3/5. In terms of biological role, catalyzes the reversible conversion of 3-phosphohydroxypyruvate to phosphoserine and of 3-hydroxy-2-oxo-4-phosphonooxybutanoate to phosphohydroxythreonine. The sequence is that of Phosphoserine aminotransferase from Acinetobacter baylyi (strain ATCC 33305 / BD413 / ADP1).